Here is a 575-residue protein sequence, read N- to C-terminus: Lysine--tRNA ligase (575 aa).

Positions 412 and 419 each coordinate Mg(2+).

Belongs to the class-II aminoacyl-tRNA synthetase family. As to quaternary structure, homodimer. Mg(2+) serves as cofactor.

The protein resides in the cytoplasm. The enzyme catalyses tRNA(Lys) + L-lysine + ATP = L-lysyl-tRNA(Lys) + AMP + diphosphate. This is Lysine--tRNA ligase from Bacteroides fragilis (strain YCH46).